We begin with the raw amino-acid sequence, 118 residues long: Large ribosomal subunit protein bL20 (118 aa).

This sequence belongs to the bacterial ribosomal protein bL20 family.

Its function is as follows. Binds directly to 23S ribosomal RNA and is necessary for the in vitro assembly process of the 50S ribosomal subunit. It is not involved in the protein synthesizing functions of that subunit. In Enterobacter sp. (strain 638), this protein is Large ribosomal subunit protein bL20.